The sequence spans 256 residues: 3-dehydroquinate dehydratase (256 aa).

3-dehydroquinate contacts are provided by residues Ser19, 38 to 40 (EIR), and Arg68. His122 functions as the Proton donor/acceptor in the catalytic mechanism. Lys147 (schiff-base intermediate with substrate) is an active-site residue. 3 residues coordinate 3-dehydroquinate: Arg185, Thr204, and Gln208.

It belongs to the type-I 3-dehydroquinase family. As to quaternary structure, homodimer.

The catalysed reaction is 3-dehydroquinate = 3-dehydroshikimate + H2O. Its pathway is metabolic intermediate biosynthesis; chorismate biosynthesis; chorismate from D-erythrose 4-phosphate and phosphoenolpyruvate: step 3/7. Functionally, involved in the third step of the chorismate pathway, which leads to the biosynthesis of aromatic amino acids. Catalyzes the cis-dehydration of 3-dehydroquinate (DHQ) and introduces the first double bond of the aromatic ring to yield 3-dehydroshikimate. The chain is 3-dehydroquinate dehydratase from Methanospirillum hungatei JF-1 (strain ATCC 27890 / DSM 864 / NBRC 100397 / JF-1).